The primary structure comprises 112 residues: Large ribosomal subunit protein uL22 (112 aa).

This sequence belongs to the universal ribosomal protein uL22 family. In terms of assembly, part of the 50S ribosomal subunit.

Its function is as follows. This protein binds specifically to 23S rRNA; its binding is stimulated by other ribosomal proteins, e.g. L4, L17, and L20. It is important during the early stages of 50S assembly. It makes multiple contacts with different domains of the 23S rRNA in the assembled 50S subunit and ribosome. The globular domain of the protein is located near the polypeptide exit tunnel on the outside of the subunit, while an extended beta-hairpin is found that lines the wall of the exit tunnel in the center of the 70S ribosome. The polypeptide is Large ribosomal subunit protein uL22 (Nitratidesulfovibrio vulgaris (strain DSM 19637 / Miyazaki F) (Desulfovibrio vulgaris)).